The sequence spans 98 residues: NADH-ubiquinone oxidoreductase chain 4L (98 aa).

3 helical membrane-spanning segments follow: residues 1 to 21 (MSLT…GLLM), 29 to 49 (SLLC…MTIL), and 61 to 81 (IILL…LVMV).

Belongs to the complex I subunit 4L family. As to quaternary structure, core subunit of respiratory chain NADH dehydrogenase (Complex I) which is composed of 45 different subunits.

The protein localises to the mitochondrion inner membrane. The enzyme catalyses a ubiquinone + NADH + 5 H(+)(in) = a ubiquinol + NAD(+) + 4 H(+)(out). In terms of biological role, core subunit of the mitochondrial membrane respiratory chain NADH dehydrogenase (Complex I) which catalyzes electron transfer from NADH through the respiratory chain, using ubiquinone as an electron acceptor. Part of the enzyme membrane arm which is embedded in the lipid bilayer and involved in proton translocation. The sequence is that of NADH-ubiquinone oxidoreductase chain 4L (MT-ND4L) from Stenoderma rufum (Red fruit bat).